We begin with the raw amino-acid sequence, 38 residues long: U-theraphotoxin-Aju1a (38 aa).

3 disulfide bridges follow: C3–C24, C7–C30, and C16–C35.

As to expression, expressed by the venom gland.

It localises to the secreted. Has strong antifungal activity against C.albicans MDM8, C.krusei IOC 4559 (MIC=2.5-5 uM), C.glabrata IOC 45658 (MIC=2.5-5 uM), C.albicans IOC 45588 (MIC=2.5-5 uM), C.parapsilosis IOC 456416 (MIC=2.5-5 uM), C.tropicalis IOC 45608 (MIC=2.5-5 uM), C.guilliermondii IOC 455716 (MIC=2.5-5 uM) and A.niger (MIC=5-10 uM). Lacks antifungal activity against B.bassiana. Has no antibacterial effect against Gram-positive bacteria M.luteus, S.epidermidis, S.aureus or against Gram-negative bacteria E.coli and P.aeruginosa. Has no hemolytic activity against human erythrocytes. Probable ion channel inhibitor. This chain is U-theraphotoxin-Aju1a, found in Avicularia juruensis (Yellow-banded pinktoe).